A 74-amino-acid polypeptide reads, in one-letter code: UPF0154 protein LVIS_1358 (74 aa).

The helical transmembrane segment at 4 to 24 threads the bilayer; that stretch reads WIWILIVIVVGLACAAGGFYG.

This sequence belongs to the UPF0154 family.

Its subcellular location is the cell membrane. The polypeptide is UPF0154 protein LVIS_1358 (Levilactobacillus brevis (strain ATCC 367 / BCRC 12310 / CIP 105137 / JCM 1170 / LMG 11437 / NCIMB 947 / NCTC 947) (Lactobacillus brevis)).